Consider the following 423-residue polypeptide: Adenylosuccinate synthetase (423 aa).

Residues 13–19 (GDEGKGK) and 41–43 (GHT) each bind GTP. Asp-14 functions as the Proton acceptor in the catalytic mechanism. Mg(2+) is bound by residues Asp-14 and Gly-41. IMP contacts are provided by residues 14-17 (DEGK), 39-42 (NAGH), Thr-130, Arg-144, Gln-223, Thr-238, and Arg-302. Catalysis depends on His-42, which acts as the Proton donor. 298–304 (SVTGRKR) serves as a coordination point for substrate. GTP contacts are provided by residues Arg-304 and 410-412 (SVG).

The protein belongs to the adenylosuccinate synthetase family. Homodimer. Mg(2+) serves as cofactor.

It is found in the cytoplasm. The enzyme catalyses IMP + L-aspartate + GTP = N(6)-(1,2-dicarboxyethyl)-AMP + GDP + phosphate + 2 H(+). It participates in purine metabolism; AMP biosynthesis via de novo pathway; AMP from IMP: step 1/2. In terms of biological role, plays an important role in the de novo pathway of purine nucleotide biosynthesis. Catalyzes the first committed step in the biosynthesis of AMP from IMP. In Porphyromonas gingivalis (strain ATCC BAA-308 / W83), this protein is Adenylosuccinate synthetase.